The chain runs to 346 residues: Methylthioribose-1-phosphate isomerase (346 aa).

Substrate-binding positions include 54–56 (RGA), arginine 91, and glutamine 192. Aspartate 233 functions as the Proton donor in the catalytic mechanism. 243–244 (NK) is a substrate binding site.

This sequence belongs to the eIF-2B alpha/beta/delta subunits family. MtnA subfamily.

The enzyme catalyses 5-(methylsulfanyl)-alpha-D-ribose 1-phosphate = 5-(methylsulfanyl)-D-ribulose 1-phosphate. It functions in the pathway amino-acid biosynthesis; L-methionine biosynthesis via salvage pathway; L-methionine from S-methyl-5-thio-alpha-D-ribose 1-phosphate: step 1/6. Its function is as follows. Catalyzes the interconversion of methylthioribose-1-phosphate (MTR-1-P) into methylthioribulose-1-phosphate (MTRu-1-P). The polypeptide is Methylthioribose-1-phosphate isomerase (Yersinia enterocolitica serotype O:8 / biotype 1B (strain NCTC 13174 / 8081)).